We begin with the raw amino-acid sequence, 185 residues long: Ribosome-recycling factor (185 aa).

It belongs to the RRF family.

The protein localises to the cytoplasm. In terms of biological role, responsible for the release of ribosomes from messenger RNA at the termination of protein biosynthesis. May increase the efficiency of translation by recycling ribosomes from one round of translation to another. In Vesicomyosocius okutanii subsp. Calyptogena okutanii (strain HA), this protein is Ribosome-recycling factor.